A 72-amino-acid chain; its full sequence is Holocyclotoxin-1 (72 aa).

Residues Met1 to Phe22 form the signal peptide. 4 disulfide bridges follow: Cys24–Cys40, Cys32–Cys57, Cys36–Cys60, and Cys42–Cys70.

In terms of tissue distribution, expressed in salivary glands.

It localises to the secreted. Its function is as follows. Probable neurotoxin. This chain is Holocyclotoxin-1, found in Ixodes holocyclus (Australian paralysis tick).